Consider the following 207-residue polypeptide: Phenazine biosynthesis protein PhzD1 (207 aa).

The Proton donor role is filled by aspartate 38. Residues glutamine 78, arginine 87, lysine 122, and tyrosine 151–glycine 155 contribute to the substrate site.

Belongs to the isochorismatase family. Homodimer.

It catalyses the reaction (2S)-2-amino-4-deoxychorismate + H2O = (5S,6S)-6-amino-5-hydroxycyclohexa-1,3-diene-1-carboxyate + pyruvate. Its pathway is antibiotic biosynthesis; phenazine biosynthesis. Functionally, involved in the biosynthesis of the antibiotic phenazine, a nitrogen-containing heterocyclic molecule. PhzD1 (operon phzA1B1C1E1F1G1) has a role in the biosynthesis of the phenazine during planktonic growth. Catalyzes the hydrolysis of the vinyl ether functional group of 2-amino-2-deoxyisochorismate (ADIC), yielding pyruvate and trans-2,3-dihydro-3-hydroxyanthranilic acid (DHHA). Also able to act on isochorismate, chorismate and 4-amino-4-deoxychorismate (ADC) as substrates. This Pseudomonas aeruginosa (strain ATCC 15692 / DSM 22644 / CIP 104116 / JCM 14847 / LMG 12228 / 1C / PRS 101 / PAO1) protein is Phenazine biosynthesis protein PhzD1.